Consider the following 353-residue polypeptide: Protein MGF 360-11L (353 aa).

The stretch at 59-88 (ELNTVLMKAAKENNHDLIRLFVEWGADINY) is one ANK repeat.

This sequence belongs to the asfivirus MGF 360 family. Interacts with host TBK1 ad IRF7.

Plays a role in virus cell tropism, and may be required for efficient virus replication in macrophages. In addition, inhibits the phosphorylation of host TBK1 and IRF7 and thereby negatively regulates the host cGAS signaling pathway and antagonizes IFN-mediated antiviral activity. This chain is Protein MGF 360-11L, found in African swine fever virus (isolate Pig/Kenya/KEN-50/1950) (ASFV).